The chain runs to 855 residues: Sucrose synthase 5 (855 aa).

A GT-B glycosyltransferase region spans residues 279 to 758 (SIFNIVIFSI…GLQRICECYT (480 aa)).

Belongs to the glycosyltransferase 1 family. Plant sucrose synthase subfamily. Predominantly expressed in roots, flowers and immature seeds.

It is found in the cytoplasm. Its subcellular location is the membrane. It catalyses the reaction an NDP-alpha-D-glucose + D-fructose = a ribonucleoside 5'-diphosphate + sucrose + H(+). Functionally, sucrose-cleaving enzyme that provides UDP-glucose and fructose for various metabolic pathways. This chain is Sucrose synthase 5 (SUS5), found in Oryza sativa subsp. japonica (Rice).